The following is a 486-amino-acid chain: Cardiolipin synthase A (486 aa).

The next 2 membrane-spanning stretches (helical) occupy residues 3-23 (TFYTVISWLSVFGYWLLIAGV) and 38-58 (MAWLLIIYILPLVGIIAYLSF). PLD phosphodiesterase domains lie at 219 to 246 (MDLRQHRKIVLIDNYVAYTGSMNMVDPR) and 399 to 426 (EGGLLHSKSVLVDGQLSLVGTVNLDMRS). Active-site residues include histidine 224, lysine 226, aspartate 231, histidine 404, lysine 406, and aspartate 411.

This sequence belongs to the phospholipase D family. Cardiolipin synthase subfamily. ClsA sub-subfamily.

It localises to the cell inner membrane. The catalysed reaction is 2 a 1,2-diacyl-sn-glycero-3-phospho-(1'-sn-glycerol) = a cardiolipin + glycerol. Functionally, catalyzes the reversible phosphatidyl group transfer from one phosphatidylglycerol molecule to another to form cardiolipin (CL) (diphosphatidylglycerol) and glycerol. The protein is Cardiolipin synthase A of Yersinia pseudotuberculosis serotype O:1b (strain IP 31758).